A 138-amino-acid chain; its full sequence is Acidic phospholipase A2 PePLA2 (138 aa).

Positions 1–16 (MRTLWIMAVLLLGVEG) are cleaved as a signal peptide. Disulfide bonds link cysteine 42/cysteine 131, cysteine 44/cysteine 60, cysteine 59/cysteine 110, cysteine 65/cysteine 138, cysteine 66/cysteine 103, cysteine 73/cysteine 97, and cysteine 91/cysteine 101. Ca(2+) is bound by residues tyrosine 43, glycine 45, and glycine 47. The active site involves histidine 63. Position 64 (aspartate 64) interacts with Ca(2+). Aspartate 104 is a catalytic residue.

The protein belongs to the phospholipase A2 family. Group II subfamily. D49 sub-subfamily. Requires Ca(2+) as cofactor. As to expression, expressed by the venom gland.

The protein localises to the secreted. It catalyses the reaction a 1,2-diacyl-sn-glycero-3-phosphocholine + H2O = a 1-acyl-sn-glycero-3-phosphocholine + a fatty acid + H(+). In terms of biological role, PLA2 catalyzes the calcium-dependent hydrolysis of the 2-acyl groups in 3-sn-phosphoglycerides. This is Acidic phospholipase A2 PePLA2 from Protobothrops elegans (Elegant pitviper).